The primary structure comprises 1079 residues: Zn(2)-C6 fungal-type transcription factor FTF1a (1079 aa).

The segment at residues 177–204 is a DNA-binding region (zn(2)-C6 fungal-type); sequence CIACRRKKIRCSGEKPACKQCLHSCIPC.

It is found in the nucleus. In terms of biological role, zn(2)-C6 fungal-type transcription factor that has a role in the establishment of the fungus within the plant and/or the progress of the disease. Regulates the expression of virulence factors such as SIX1 and SIX6. The chain is Zn(2)-C6 fungal-type transcription factor FTF1a from Fusarium oxysporum f. sp. lycopersici (strain 4287 / CBS 123668 / FGSC 9935 / NRRL 34936) (Fusarium vascular wilt of tomato).